The following is a 450-amino-acid chain: Equilibrative nucleotide transporter 1 (450 aa).

11 helical membrane-spanning segments follow: residues 63-83 (FAYIIYFTLGVGFLLPWNAFI), 101-121 (IFAVIYMLVALVCLFVIVVFY), 133-153 (LGLLLFVIALLVVPVLDLVYV), 168-188 (AAVALSGLGDALMQGGLIGVA), 196-216 (MQAVVAGTAGSGVLVSLLRIL), 234-254 (LYFAVGIVVMVICAVFYNVAH), 300-320 (HGFGIVLLYMVTLSIFPGYIT), 334-354 (ILLIAAYNVFDLVGKCLTAVF), 361-381 (IAVGGSIARLLFYPLFWGCLH), 394-414 (ILTCLLGLTNGYLTSVLMILA), and 430-450 (TVMFLVVGLASGSVIAWFWVI).

It belongs to the SLC29A/ENT transporter (TC 2.A.57) family. In terms of tissue distribution, in young seedlings, expressed in root elongation zone, root cortex, root-hair, at the transition to the shoot and cotyledons. Expressed in hydathodes of fully developed leaves and pollen.

It is found in the vacuole membrane. In terms of biological role, nucleoside transporter involved in adenosine transport and required for nucleotide metabolism which influences growth and pollen germination. Has high affinity for adenosine when expressed in a heterologous system (yeast). This is Equilibrative nucleotide transporter 1 (ENT1) from Arabidopsis thaliana (Mouse-ear cress).